The sequence spans 33 residues: Maurocalcin (33 aa).

Disulfide bonds link Cys-3/Cys-17, Cys-10/Cys-21, and Cys-16/Cys-32. Positions 22 to 24 (KRR) are essential for stimulation of [3H]ryanodine binding to RYR.

It belongs to the scorpion calcin family. Post-translationally, the non-natural D-maurocalcin (a chiral analog of maurocalcin composed of D-amino acids) completely loses the ability to stimulate [3H]ryanodine binding and calcium release. Its protease resistance, combined with its efficient cell penetration at concentrations devoid of cell toxicity, suggests that it should be an excellent vector for in vivo applications. As to expression, expressed by the venom gland.

Its subcellular location is the secreted. In terms of biological role, this toxin stabilizes ryanodine receptor 1 (RyR1) opening in a long-lasting subconductance state (48%-60% of the full conductance state). Furthermore, it triggers calcium release from sarcoplasmic vesicles (6.6 nM are enough to induce a sharp release, and 60% of the total calcium is released after toxin (100 nM) addition) probably by acting as a cell-penetrating peptide (CPP). In addition, it has been shown to dose-dependently stimulate ryanodine binding to RyR1 (EC(50)=12.5-26.4 nM). It also augments the bell-shaped calcium-[3H]ryanodine binding curve that is maximal at about 10 uM calcium concentration. It binds a different site as ryanodine. It acts synergistically with caffeine. In vivo, intracerebroventricular injection into mice causes death. This chain is Maurocalcin, found in Scorpio palmatus (Israeli golden scorpion).